The chain runs to 239 residues: 2,3,4,5-tetrahydropyridine-2,6-dicarboxylate N-acetyltransferase (239 aa).

This sequence belongs to the transferase hexapeptide repeat family. DapH subfamily.

The enzyme catalyses (S)-2,3,4,5-tetrahydrodipicolinate + acetyl-CoA + H2O = L-2-acetamido-6-oxoheptanedioate + CoA. The protein operates within amino-acid biosynthesis; L-lysine biosynthesis via DAP pathway; LL-2,6-diaminopimelate from (S)-tetrahydrodipicolinate (acetylase route): step 1/3. Its function is as follows. Catalyzes the transfer of an acetyl group from acetyl-CoA to tetrahydrodipicolinate. The polypeptide is 2,3,4,5-tetrahydropyridine-2,6-dicarboxylate N-acetyltransferase (Staphylococcus aureus (strain MRSA252)).